The chain runs to 426 residues: Enolase (426 aa).

The disordered stretch occupies residues 32–53 (TGRAAVPSGASTGAYEAHEQRD). Residue Gln-163 coordinates (2R)-2-phosphoglycerate. Catalysis depends on Glu-205, which acts as the Proton donor. The Mg(2+) site is built by Asp-242, Glu-285, and Asp-312. (2R)-2-phosphoglycerate-binding residues include Lys-337, Arg-366, Ser-367, and Lys-388. Lys-337 (proton acceptor) is an active-site residue.

Belongs to the enolase family. The cofactor is Mg(2+).

It is found in the cytoplasm. The protein resides in the secreted. It localises to the cell surface. It catalyses the reaction (2R)-2-phosphoglycerate = phosphoenolpyruvate + H2O. The protein operates within carbohydrate degradation; glycolysis; pyruvate from D-glyceraldehyde 3-phosphate: step 4/5. Functionally, catalyzes the reversible conversion of 2-phosphoglycerate (2-PG) into phosphoenolpyruvate (PEP). It is essential for the degradation of carbohydrates via glycolysis. The polypeptide is Enolase (Hyphomonas neptunium (strain ATCC 15444)).